A 383-amino-acid polypeptide reads, in one-letter code: Cytochrome b (383 aa).

The next 4 helical transmembrane spans lie at 35–55 (FGSI…ILSM), 79–100 (WLFR…YIHI), 115–135 (WGIG…GYVL), and 180–200 (FFSL…LHLF). Heme b-binding residues include histidine 85 and histidine 99. Heme b-binding residues include histidine 184 and histidine 198. Histidine 203 provides a ligand contact to a ubiquinone. 4 helical membrane passes run 228–248 (IKDL…NFQF), 290–310 (LGGV…IFYN), 321–341 (LNKI…WLGK), and 348–368 (FTNI…LNFY).

The protein belongs to the cytochrome b family. As to quaternary structure, the main subunits of complex b-c1 are: cytochrome b, cytochrome c1 and the Rieske protein. It depends on heme b as a cofactor.

Its subcellular location is the mitochondrion inner membrane. Its function is as follows. Component of the ubiquinol-cytochrome c reductase complex (complex III or cytochrome b-c1 complex) that is part of the mitochondrial respiratory chain. The b-c1 complex mediates electron transfer from ubiquinol to cytochrome c. Contributes to the generation of a proton gradient across the mitochondrial membrane that is then used for ATP synthesis. This Apis mellifera ligustica (Common honeybee) protein is Cytochrome b (MT-CYB).